The primary structure comprises 304 residues: N-acetylmuramic acid 6-phosphate etherase (304 aa).

The SIS domain occupies Ile-58–Lys-221. The Proton donor role is filled by Glu-86. Glu-117 is an active-site residue.

Belongs to the GCKR-like family. MurNAc-6-P etherase subfamily. As to quaternary structure, homodimer.

It carries out the reaction N-acetyl-D-muramate 6-phosphate + H2O = N-acetyl-D-glucosamine 6-phosphate + (R)-lactate. It participates in amino-sugar metabolism; N-acetylmuramate degradation. Specifically catalyzes the cleavage of the D-lactyl ether substituent of MurNAc 6-phosphate, producing GlcNAc 6-phosphate and D-lactate. The chain is N-acetylmuramic acid 6-phosphate etherase from Clostridioides difficile (strain 630) (Peptoclostridium difficile).